The following is a 99-amino-acid chain: Malonate decarboxylase acyl carrier protein (99 aa).

An O-(phosphoribosyl dephospho-coenzyme A)serine modification is found at Ser-25.

Belongs to the MdcC family. Post-translationally, covalently binds the prosthetic group of malonate decarboxylase.

It is found in the cytoplasm. Subunit of malonate decarboxylase, it is an acyl carrier protein to which acetyl and malonyl thioester residues are bound via a 2'-(5''-phosphoribosyl)-3'-dephospho-CoA prosthetic group and turn over during the catalytic mechanism. This Pseudomonas fluorescens (strain ATCC BAA-477 / NRRL B-23932 / Pf-5) protein is Malonate decarboxylase acyl carrier protein.